A 386-amino-acid polypeptide reads, in one-letter code: UDP-N-acetylbacillosamine transaminase (386 aa).

Substrate-binding positions include 25 to 28, Ala56, and Ser179; that span reads NYIA. N6-(pyridoxal phosphate)lysine is present on Lys184. Substrate contacts are provided by residues Asn227 and 325–328; that span reads QIET.

This sequence belongs to the DegT/DnrJ/EryC1 family. The cofactor is pyridoxal 5'-phosphate.

The catalysed reaction is UDP-N-acetylbacillosamine + 2-oxoglutarate = UDP-2-acetamido-2,6-dideoxy-alpha-D-xylo-hex-4-ulose + L-glutamate. Its pathway is protein modification; protein glycosylation. In terms of biological role, aminotransferase involved in the bacillosamine biosynthesis pathway by producing UDP-4-amino-4,6-dideoxy-alpha-D-GlcNAc (UDP-2-acetamido-4-amino-2,4,6-trideoxy-alpha-D-glucopyranose), a precursor used in the production of the glycan component 2,4-diacetamido-2,4,6-trideoxy-alpha-D-glucopyranose. Required for host colonization and virulence. Involved in the N-linked protein glycosylation pathway. This Campylobacter jejuni subsp. jejuni serotype O:2 (strain ATCC 700819 / NCTC 11168) protein is UDP-N-acetylbacillosamine transaminase (pglE).